Reading from the N-terminus, the 454-residue chain is Mitochondrial dynamics protein MID49 (454 aa).

The Mitochondrial intermembrane segment spans residues 1–22 (MAEFSQKQRKQSGSEGLGSVVD). A helical transmembrane segment spans residues 23-43 (FLLANARLVLGVGGAAVLGIA). Over 44 to 454 (TLAVKRLIDR…SGLQVPESLF (411 aa)) the chain is Cytoplasmic. Positions 76-113 (ATSPQKPQPPPAAFSQPLATGSPSPSVPVEPTPIHSPT) are disordered.

The protein belongs to the MID49/MID51 family. In terms of assembly, interacts with DNM1L.

It localises to the mitochondrion outer membrane. In terms of biological role, mitochondrial outer membrane protein which regulates mitochondrial organization. It is required for mitochondrial fission and promotes the recruitment and association of the fission mediator dynamin-related protein 1 (DNM1L) to the mitochondrial surface independently of the mitochondrial fission FIS1 and MFF proteins. Regulates DNM1L GTPase activity. In Mus musculus (Mouse), this protein is Mitochondrial dynamics protein MID49 (Mief2).